Reading from the N-terminus, the 1356-residue chain is DNA-directed RNA polymerase subunit beta (1356 aa).

The protein belongs to the RNA polymerase beta chain family. In terms of assembly, the RNAP catalytic core consists of 2 alpha, 1 beta, 1 beta' and 1 omega subunit. When a sigma factor is associated with the core the holoenzyme is formed, which can initiate transcription.

The catalysed reaction is RNA(n) + a ribonucleoside 5'-triphosphate = RNA(n+1) + diphosphate. Functionally, DNA-dependent RNA polymerase catalyzes the transcription of DNA into RNA using the four ribonucleoside triphosphates as substrates. This Stutzerimonas stutzeri (strain A1501) (Pseudomonas stutzeri) protein is DNA-directed RNA polymerase subunit beta.